The following is a 262-amino-acid chain: Phosphatidylserine decarboxylase proenzyme (262 aa).

Catalysis depends on charge relay system; for autoendoproteolytic cleavage activity residues aspartate 86, histidine 142, and serine 226. Serine 226 functions as the Schiff-base intermediate with substrate; via pyruvic acid; for decarboxylase activity in the catalytic mechanism. Serine 226 is modified (pyruvic acid (Ser); by autocatalysis).

The protein belongs to the phosphatidylserine decarboxylase family. PSD-B subfamily. Prokaryotic type I sub-subfamily. As to quaternary structure, heterodimer of a large membrane-associated beta subunit and a small pyruvoyl-containing alpha subunit. Pyruvate is required as a cofactor. Post-translationally, is synthesized initially as an inactive proenzyme. Formation of the active enzyme involves a self-maturation process in which the active site pyruvoyl group is generated from an internal serine residue via an autocatalytic post-translational modification. Two non-identical subunits are generated from the proenzyme in this reaction, and the pyruvate is formed at the N-terminus of the alpha chain, which is derived from the carboxyl end of the proenzyme. The autoendoproteolytic cleavage occurs by a canonical serine protease mechanism, in which the side chain hydroxyl group of the serine supplies its oxygen atom to form the C-terminus of the beta chain, while the remainder of the serine residue undergoes an oxidative deamination to produce ammonia and the pyruvoyl prosthetic group on the alpha chain. During this reaction, the Ser that is part of the protease active site of the proenzyme becomes the pyruvoyl prosthetic group, which constitutes an essential element of the active site of the mature decarboxylase.

It localises to the cell membrane. The enzyme catalyses a 1,2-diacyl-sn-glycero-3-phospho-L-serine + H(+) = a 1,2-diacyl-sn-glycero-3-phosphoethanolamine + CO2. The protein operates within phospholipid metabolism; phosphatidylethanolamine biosynthesis; phosphatidylethanolamine from CDP-diacylglycerol: step 2/2. Functionally, catalyzes the formation of phosphatidylethanolamine (PtdEtn) from phosphatidylserine (PtdSer). The protein is Phosphatidylserine decarboxylase proenzyme of Bacillus cereus (strain B4264).